The primary structure comprises 454 residues: Metacaspase-1A (454 aa).

Residues 1–16 (MSYGYPGQGYGPGGGH) show a composition bias toward gly residues. The segment at 1–129 (MSYGYPGQGY…GHQTRNQGSH (129 aa)) is disordered. 4 stretches are compositionally biased toward low complexity: residues 38–47 (YSNPGQGQYN), 59–80 (YHQQPPQQYQQGSYNQGQYPPQ), 88–101 (GQQQQHHQQGHSQR), and 109–120 (GYDIYGYPIGSG). Active-site residues include His244 and Cys300.

The protein belongs to the peptidase C14B family.

In terms of biological role, involved in cell death (apoptosis). This Neurospora crassa (strain ATCC 24698 / 74-OR23-1A / CBS 708.71 / DSM 1257 / FGSC 987) protein is Metacaspase-1A (casA).